A 117-amino-acid chain; its full sequence is UPF0102 protein RSKD131_0118 (117 aa).

This sequence belongs to the UPF0102 family.

This is UPF0102 protein RSKD131_0118 from Cereibacter sphaeroides (strain KD131 / KCTC 12085) (Rhodobacter sphaeroides).